The chain runs to 708 residues: Polyribonucleotide nucleotidyltransferase (708 aa).

Positions 488 and 494 each coordinate Mg(2+). The KH domain occupies 555–615 (PIIKVTKVDP…ENVDKAIELI (61 aa)). The 68-residue stretch at 625–692 (GEVLEGKVTR…DLGRLQFKRV (68 aa)) folds into the S1 motif domain.

This sequence belongs to the polyribonucleotide nucleotidyltransferase family. Mg(2+) serves as cofactor.

The protein resides in the cytoplasm. The enzyme catalyses RNA(n+1) + phosphate = RNA(n) + a ribonucleoside 5'-diphosphate. In terms of biological role, involved in mRNA degradation. Catalyzes the phosphorolysis of single-stranded polyribonucleotides processively in the 3'- to 5'-direction. This Thermotoga sp. (strain RQ2) protein is Polyribonucleotide nucleotidyltransferase.